Consider the following 65-residue polypeptide: Disintegrin CC5 (65 aa).

The region spanning 1-65 (MNSAHPCCDP…SDCPRNRYKS (65 aa)) is the Disintegrin domain. Intrachain disulfides connect Cys7–Cys30, Cys21–Cys27, Cys26–Cys51, and Cys39–Cys58. The short motif at 43–45 (RGD) is the Cell attachment site element.

It belongs to the disintegrin family. Dimeric disintegrin subfamily. In terms of assembly, homodimer; disulfide-linked. Expressed by the venom gland.

It is found in the secreted. In terms of biological role, binds and inhibits integrins alpha-IIb/beta-3 (ITGA2B/ITGB3), alpha-V/beta-3 (ITGAV/ITGB3) and alpha-5/beta-1 (ITGA5/ITGB1). This is Disintegrin CC5 from Cerastes cerastes (Horned desert viper).